The primary structure comprises 365 residues: Putative chalcone synthase (365 aa).

C144 is a catalytic residue.

Belongs to the thiolase-like superfamily. Chalcone/stilbene synthases family.

It catalyses the reaction (E)-4-coumaroyl-CoA + 3 malonyl-CoA + 3 H(+) = 2',4,4',6'-tetrahydroxychalcone + 3 CO2 + 4 CoA. The chain is Putative chalcone synthase (bcsA) from Bacillus subtilis (strain 168).